Consider the following 354-residue polypeptide: Phosphoribosylformylglycinamidine cyclo-ligase (354 aa).

The protein belongs to the AIR synthase family.

Its subcellular location is the cytoplasm. The enzyme catalyses 2-formamido-N(1)-(5-O-phospho-beta-D-ribosyl)acetamidine + ATP = 5-amino-1-(5-phospho-beta-D-ribosyl)imidazole + ADP + phosphate + H(+). The protein operates within purine metabolism; IMP biosynthesis via de novo pathway; 5-amino-1-(5-phospho-D-ribosyl)imidazole from N(2)-formyl-N(1)-(5-phospho-D-ribosyl)glycinamide: step 2/2. This Marinobacter nauticus (strain ATCC 700491 / DSM 11845 / VT8) (Marinobacter aquaeolei) protein is Phosphoribosylformylglycinamidine cyclo-ligase.